We begin with the raw amino-acid sequence, 404 residues long: Probable thioredoxin reductase ARB_06224 (404 aa).

Residues 1 to 22 (MGVQRLALALIAFTSALTSVIA) form the signal peptide. 67–75 (DEGIYRNGA) contacts FAD. Cys-172 and Cys-175 are oxidised to a cystine. An N-linked (GlcNAc...) asparagine glycan is attached at Asn-213. 334 to 343 (DANNDGSTNG) serves as a coordination point for FAD.

It belongs to the class-II pyridine nucleotide-disulfide oxidoreductase family. As to quaternary structure, homodimer. FAD serves as cofactor.

The protein resides in the secreted. It carries out the reaction [thioredoxin]-dithiol + NADP(+) = [thioredoxin]-disulfide + NADPH + H(+). The sequence is that of Probable thioredoxin reductase ARB_06224 from Arthroderma benhamiae (strain ATCC MYA-4681 / CBS 112371) (Trichophyton mentagrophytes).